Here is a 435-residue protein sequence, read N- to C-terminus: 3-ketoacyl-CoA thiolase (435 aa).

The active-site Acyl-thioester intermediate is Cys-98. Active-site proton acceptor residues include His-391 and Cys-421.

It belongs to the thiolase-like superfamily. Thiolase family. Heterotetramer of two alpha chains (FadJ) and two beta chains (FadI).

The protein resides in the cytoplasm. It catalyses the reaction an acyl-CoA + acetyl-CoA = a 3-oxoacyl-CoA + CoA. It participates in lipid metabolism; fatty acid beta-oxidation. Functionally, catalyzes the final step of fatty acid oxidation in which acetyl-CoA is released and the CoA ester of a fatty acid two carbons shorter is formed. In Vibrio vulnificus (strain CMCP6), this protein is 3-ketoacyl-CoA thiolase.